The primary structure comprises 574 residues: MAIDPQPSSPSLSSETIANDTIGNDNNVNEPSVEPKTQEHQHTVPPRLSRIYSQAHHISQSFIDQNYPGEGTTQVPYRINFLPDDSQNAQLPPPMEEVGICGIKQVIRAFGISQEVATLGISLYVLGFTFGPLIWAPLSELYGRKKVFFFTFMVATAFSAGAAGAGSIASLLVLRFLTGSIGSAPLSNAPALIADMFDKSERGLAMCMFSGAPFLGPAIGPIAGGFLGETAGWRWLHGLMAAFTGVTWIACTVFIPETYAPYILRKRAQHMSKLTGKVYISTLDADKPPSSAAHQLKNALTRPWLLLFKEPIVFITSIYISIIYGTMYMCFAAFPIVFQQGRGWSQGIGGLAFTGIVIGVILSIISFAFEDKRYARAAQRRGAPMEPEDRLPPAIMGSLLIPIGLFWFAWTTFASIHWIVPIIGTVFFAWGLVLVFMALLNYLIDSYVIFAASIMAANSALRSLFGAAFPLFTRQMYDGLGVQWASSIPAFLALACVPFPFLFYKYGRQIRMKCEYAAEAANVLQKMRSLHVTVTEDDAMNEAEEMWRARTHNSHTSATHSHGHRRSLSCTRSV.

Positions 1–44 (MAIDPQPSSPSLSSETIANDTIGNDNNVNEPSVEPKTQEHQHTV) are disordered. Positions 9–30 (SPSLSSETIANDTIGNDNNVNE) are enriched in polar residues. N-linked (GlcNAc...) asparagine glycosylation occurs at Asn-19. Helical transmembrane passes span 116–136 (VATLGISLYVLGFTFGPLIWA), 148–168 (FFFTFMVATAFSAGAAGAGSI), 176–196 (FLTGSIGSAPLSNAPALIADM), 208–228 (MFSGAPFLGPAIGPIAGGFLG), 235–255 (WLHGLMAAFTGVTWIACTVFI), 318–338 (IYISIIYGTMYMCFAAFPIVF), 348–368 (IGGLAFTGIVIGVILSIISFA), 394–414 (AIMGSLLIPIGLFWFAWTTFA), 419–439 (IVPIIGTVFFAWGLVLVFMAL), 449–469 (IFAASIMAANSALRSLFGAAF), and 484–504 (WASSIPAFLALACVPFPFLFY). Residues 552-574 (HNSHTSATHSHGHRRSLSCTRSV) form a disordered region.

This sequence belongs to the major facilitator superfamily. DHA1 family. Polyamines/proton antiporter (TC 2.A.1.2.16) subfamily.

Its subcellular location is the cell membrane. In terms of biological role, efflux pump involved in export of fusaric acid, a mycotoxin with low to moderate toxicity to animals and humans, but with high phytotoxic properties. Constitutes a self-protecting mechanism of the fungus against critical levels of fusaric acid within the cell. This Gibberella fujikuroi (strain CBS 195.34 / IMI 58289 / NRRL A-6831) (Bakanae and foot rot disease fungus) protein is Efflux pump FUB11.